Consider the following 1250-residue polypeptide: DNA topoisomerase 3-alpha (1250 aa).

The region spanning 27-171 (KYLNVAEKND…NISVYRATFS (145 aa)) is the Toprim domain. In terms of domain architecture, Topo IA-type catalytic spans 189 to 610 (DKRQSDAVDV…EQIAKYKQAY (422 aa)). Tyrosine 356 serves as the catalytic O-(5'-phospho-DNA)-tyrosine intermediate. A compositionally biased stretch (gly residues) spans 769-835 (RGGGGGPGPG…GTGGGGLGGG (67 aa)). Disordered regions lie at residues 769 to 899 (RGGG…GLDE) and 953 to 1035 (NGGT…TVLC). A compositionally biased stretch (basic and acidic residues) spans 840 to 865 (PGGESKKSATKKPPNEPKPKKTKEPK). A compositionally biased stretch (low complexity) spans 866-886 (AAPNKKTSSKSSGSIRSFFTS). The segment covering 956–965 (TMPTESNGDQ) has biased composition (polar residues). Basic and acidic residues-rich tracts occupy residues 966-994 (QLDK…RERA) and 1012-1021 (PRWDSVERDS). Over residues 1022-1033 (TPPSSVPESETV) the composition is skewed to low complexity. Residues cysteine 1035, cysteine 1038, cysteine 1061, and cysteine 1067 each coordinate Zn(2+). Residues 1035 to 1076 (CTGCQQPARQNTVRKNGPNLGRLYYKCPKPDECNFFQWADEP) form a GRF-type 1 zinc finger. The segment at 1069-1150 (FFQWADEPPS…TATPGDGEEV (82 aa)) is disordered. The segment covering 1079–1101 (SAKSKNSTGSAPQSTTSWGSNRV) has biased composition (polar residues). The span at 1106–1134 (SIQQSNSQRGQSSMRSNSSSTVTITQTKT) shows a compositional bias: low complexity. 4 residues coordinate Zn(2+): cysteine 1152, cysteine 1154, cysteine 1177, and cysteine 1184. The segment at 1152–1193 (CNCGQLASQLTVRKDGPNQGRPFYACPTREKSCGFFKWGDED) adopts a GRF-type 2 zinc-finger fold. The segment at 1188–1231 (KWGDEDQNQGASSTSWGSANRNPPGRSQPTAITSDGPKTRRCGL) is disordered. The segment covering 1195-1220 (NQGASSTSWGSANRNPPGRSQPTAIT) has biased composition (polar residues).

It belongs to the type IA topoisomerase family.

It carries out the reaction ATP-independent breakage of single-stranded DNA, followed by passage and rejoining.. Functionally, releases the supercoiling and torsional tension of DNA introduced during the DNA replication and transcription by transiently cleaving and rejoining one strand of the DNA duplex. Introduces a single-strand break via transesterification at a target site in duplex DNA. The scissile phosphodiester is attacked by the catalytic tyrosine of the enzyme, resulting in the formation of a DNA-(5'-phosphotyrosyl)-enzyme intermediate and the expulsion of a 3'-OH DNA strand. The free DNA strand than undergoes passage around the unbroken strand thus removing DNA supercoils. Finally, in the religation step, the DNA 3'-OH attacks the covalent intermediate to expel the active-site tyrosine and restore the DNA phosphodiester backbone. Weakly relaxes negative supercoils and displays a distinct preference for binding single-stranded DNA. This Drosophila melanogaster (Fruit fly) protein is DNA topoisomerase 3-alpha (Top3alpha).